Consider the following 721-residue polypeptide: DNA ligase (721 aa).

NAD(+) is bound by residues 39-43, 89-90, and E123; these read DAEYD and SL. The active-site N6-AMP-lysine intermediate is K125. 4 residues coordinate NAD(+): R146, E186, K302, and K326. Zn(2+) contacts are provided by C418, C421, C436, and C442. The segment at 556–588 is disordered; sequence QASSAAREGEPANADGAYDPATVTPDSDTAGAE. Residues 641–721 form the BRCT domain; sequence TKDSAVAGKT…AWAEIVRQAG (81 aa).

It belongs to the NAD-dependent DNA ligase family. LigA subfamily. The cofactor is Mg(2+). Mn(2+) is required as a cofactor.

It catalyses the reaction NAD(+) + (deoxyribonucleotide)n-3'-hydroxyl + 5'-phospho-(deoxyribonucleotide)m = (deoxyribonucleotide)n+m + AMP + beta-nicotinamide D-nucleotide.. Functionally, DNA ligase that catalyzes the formation of phosphodiester linkages between 5'-phosphoryl and 3'-hydroxyl groups in double-stranded DNA using NAD as a coenzyme and as the energy source for the reaction. It is essential for DNA replication and repair of damaged DNA. This is DNA ligase from Novosphingobium aromaticivorans (strain ATCC 700278 / DSM 12444 / CCUG 56034 / CIP 105152 / NBRC 16084 / F199).